Here is a 572-residue protein sequence, read N- to C-terminus: Urease subunit alpha (572 aa).

One can recognise a Urease domain in the interval 136 to 572 (GGIDTHIHFI…VPLGQRYFLF (437 aa)). The Ni(2+) site is built by histidine 141, histidine 143, and lysine 224. Lysine 224 carries the N6-carboxylysine modification. Residue histidine 226 coordinates substrate. The Ni(2+) site is built by histidine 253 and histidine 279. The active-site Proton donor is histidine 327. Aspartate 367 serves as a coordination point for Ni(2+).

The protein belongs to the metallo-dependent hydrolases superfamily. Urease alpha subunit family. As to quaternary structure, heterotrimer of UreA (gamma), UreB (beta) and UreC (alpha) subunits. Three heterotrimers associate to form the active enzyme. Requires Ni cation as cofactor. Post-translationally, carboxylation allows a single lysine to coordinate two nickel ions.

The protein localises to the cytoplasm. The catalysed reaction is urea + 2 H2O + H(+) = hydrogencarbonate + 2 NH4(+). Its pathway is nitrogen metabolism; urea degradation; CO(2) and NH(3) from urea (urease route): step 1/1. In Haemophilus influenzae (strain ATCC 51907 / DSM 11121 / KW20 / Rd), this protein is Urease subunit alpha.